The following is a 433-amino-acid chain: 23S rRNA (uracil(1939)-C(5))-methyltransferase RlmD (433 aa).

The TRAM domain occupies arginine 10–arginine 68. Residues cysteine 81, cysteine 87, cysteine 90, and cysteine 162 each coordinate [4Fe-4S] cluster. Residues glutamine 265, phenylalanine 294, asparagine 299, glutamate 315, asparagine 342, and aspartate 363 each contribute to the S-adenosyl-L-methionine site. Catalysis depends on cysteine 389, which acts as the Nucleophile.

This sequence belongs to the class I-like SAM-binding methyltransferase superfamily. RNA M5U methyltransferase family. RlmD subfamily.

The enzyme catalyses uridine(1939) in 23S rRNA + S-adenosyl-L-methionine = 5-methyluridine(1939) in 23S rRNA + S-adenosyl-L-homocysteine + H(+). Its function is as follows. Catalyzes the formation of 5-methyl-uridine at position 1939 (m5U1939) in 23S rRNA. The polypeptide is 23S rRNA (uracil(1939)-C(5))-methyltransferase RlmD (Shigella sonnei (strain Ss046)).